Consider the following 258-residue polypeptide: Apolipoprotein E (258 aa).

A signal peptide spans 1-19; the sequence is MRVWTVLLGAVLLLAACQA. 3 consecutive repeat copies span residues 112–133, 134–155, and 156–173. The segment at 112–173 is 3 X 22 AA approximate tandem repeats; it reads VDMEEAKTRV…KLEAYSKEAT (62 aa).

Belongs to the apolipoprotein A1/A4/E family. As to quaternary structure, homotetramer.

The protein resides in the secreted. It is found in the extracellular space. It localises to the extracellular matrix. In terms of biological role, APOE is an apolipoprotein, a protein associating with lipid particles, that mainly functions in lipoprotein-mediated lipid transport between organs via the plasma and interstitial fluids. APOE is a core component of plasma lipoproteins and is involved in their production, conversion and clearance. Apolipoproteins are amphipathic molecules that interact both with lipids of the lipoprotein particle core and the aqueous environment of the plasma. The chain is Apolipoprotein E (APOE) from Alligator mississippiensis (American alligator).